Reading from the N-terminus, the 166-residue chain is Putative protein PTGES3L (166 aa).

In terms of domain architecture, CS spans R46 to D154. The segment at S142–N166 is disordered. Positions D151–N166 are enriched in acidic residues.

This sequence belongs to the p23/wos2 family.

The polypeptide is Putative protein PTGES3L (Homo sapiens (Human)).